A 98-amino-acid chain; its full sequence is MSSDPRDVLLAPVISEKSYGLLDQNKYTFLVPPESNKTQIKIAVEKVFNVRVLDVNTINRQGKRKRTRRGWGQRKNTKRAIVTVAPGDRIDIFGPPVS.

It belongs to the universal ribosomal protein uL23 family. Part of the 50S ribosomal subunit. Contacts protein L29, and trigger factor when it is bound to the ribosome.

In terms of biological role, one of the early assembly proteins it binds 23S rRNA. One of the proteins that surrounds the polypeptide exit tunnel on the outside of the ribosome. Forms the main docking site for trigger factor binding to the ribosome. The sequence is that of Large ribosomal subunit protein uL23 from Acidothermus cellulolyticus (strain ATCC 43068 / DSM 8971 / 11B).